Reading from the N-terminus, the 256-residue chain is tRNA pseudouridine synthase A (256 aa).

Asp52 serves as the catalytic Nucleophile. Position 110 (Tyr110) interacts with substrate.

This sequence belongs to the tRNA pseudouridine synthase TruA family. Homodimer.

The enzyme catalyses uridine(38/39/40) in tRNA = pseudouridine(38/39/40) in tRNA. Its function is as follows. Formation of pseudouridine at positions 38, 39 and 40 in the anticodon stem and loop of transfer RNAs. This is tRNA pseudouridine synthase A from Stenotrophomonas maltophilia (strain K279a).